Reading from the N-terminus, the 334-residue chain is Endochitinase 3 (334 aa).

Residues Met1–Ala23 form the signal peptide. Residues Glu24–Ser65 enclose the Chitin-binding type-1 domain. 4 disulfide bridges follow: Cys26–Cys41, Cys35–Cys47, Cys40–Cys54, and Cys59–Cys63. The interval Pro64–Asp84 is disordered. Positions Gly66 to Gly79 are enriched in pro residues. Residues Pro73, Pro74, and Pro76 each carry the 4-hydroxyproline modification. Cystine bridges form between Cys106–Cys168, Cys180–Cys188, and Cys287–Cys319. The active-site Proton donor is Glu150. A propeptide spans Gly328–Met334 (removed in mature form).

It belongs to the glycosyl hydrolase 19 family. Chitinase class I subfamily. The 4-hydroxyproline residues are not glycosylated in this plant vacuolar protein.

It localises to the vacuole. The catalysed reaction is Random endo-hydrolysis of N-acetyl-beta-D-glucosaminide (1-&gt;4)-beta-linkages in chitin and chitodextrins.. Its function is as follows. Defense against chitin-containing fungal pathogens. The chain is Endochitinase 3 (CHN14) from Nicotiana tabacum (Common tobacco).